The chain runs to 220 residues: Large ribosomal subunit protein uL16 (220 aa).

The protein belongs to the universal ribosomal protein uL16 family. As to quaternary structure, component of the large ribosomal subunit. Mature ribosomes consist of a small (40S) and a large (60S) subunit. The 40S subunit contains about 32 different proteins and 1 molecule of RNA (18S). The 60S subunit contains 45 different proteins and 3 molecules of RNA (25S, 5.8S and 5S).

The protein localises to the cytoplasm. In terms of biological role, component of the ribosome, a large ribonucleoprotein complex responsible for the synthesis of proteins in the cell. The small ribosomal subunit (SSU) binds messenger RNAs (mRNAs) and translates the encoded message by selecting cognate aminoacyl-transfer RNA (tRNA) molecules. The large subunit (LSU) contains the ribosomal catalytic site termed the peptidyl transferase center (PTC), which catalyzes the formation of peptide bonds, thereby polymerizing the amino acids delivered by tRNAs into a polypeptide chain. The nascent polypeptides leave the ribosome through a tunnel in the LSU and interact with protein factors that function in enzymatic processing, targeting, and the membrane insertion of nascent chains at the exit of the ribosomal tunnel. The polypeptide is Large ribosomal subunit protein uL16 (Candida albicans (strain SC5314 / ATCC MYA-2876) (Yeast)).